The sequence spans 584 residues: AAA ATPase forming ring-shaped complexes (584 aa).

Residues 10–96 (AQSGTEHAEQ…LKENLDAVTH (87 aa)) adopt a coiled-coil conformation. The tract at residues 40–66 (HQLQSAQRHAAGLSERRRAAEAQTQTA) is disordered. 292-297 (GTGKTM) contacts ATP.

This sequence belongs to the AAA ATPase family. Homohexamer. Assembles into a hexameric ring structure.

The sequence is that of AAA ATPase forming ring-shaped complexes from Micrococcus luteus (strain ATCC 4698 / DSM 20030 / JCM 1464 / CCM 169 / CCUG 5858 / IAM 1056 / NBRC 3333 / NCIMB 9278 / NCTC 2665 / VKM Ac-2230) (Micrococcus lysodeikticus).